Reading from the N-terminus, the 161-residue chain is Glycine-rich RNA-binding protein blt801 (161 aa).

The 79-residue stretch at 6 to 84 (YRCFVGGLRW…RNITVNEAQS (79 aa)) folds into the RRM domain. Residues 72-161 (LDGRNITVNE…GGSGGGNWRE (90 aa)) form a disordered region. Position 87 is a phosphoserine; by PKA (Ser87). Residues 89 to 161 (GGGGFGGGGG…GGSGGGNWRE (73 aa)) are compositionally biased toward gly residues.

In terms of biological role, binds single-stranded DNA and homoribopolymers of guanine, uracil and adenine, but not cytosine. Also binds RNA, with a preference for RNA containing a high proportion of adenine within an open loop structure. Possibly has a role in RNA transcription or processing during stress. In Hordeum vulgare (Barley), this protein is Glycine-rich RNA-binding protein blt801.